Reading from the N-terminus, the 653-residue chain is ATP-dependent rRNA helicase SPB4 (653 aa).

Residues 17–45 (WQALTPPLSEWILDAVAAMGFTRMTPVQA) carry the Q motif motif. The Helicase ATP-binding domain occupies 48 to 257 (IPLFMGHKDV…RVGLRNPVKI (210 aa)). Residue 61–68 (AVTGSGKT) participates in ATP binding. The DEAD box signature appears at 205–208 (DEAD). The 154-residue stretch at 291–444 (AIRQILNSID…SPPVALSDTL (154 aa)) folds into the Helicase C-terminal domain. The segment at 534–653 (KQREKHRQES…DGESEFEGFD (120 aa)) is disordered. Residues 558 to 569 (PSSSSNNDTAPW) show a composition bias toward polar residues. The stretch at 571-627 (KTLEKKSDKEKRRERKRAKKEREHWEKMTEEEKTKSRETHQMLEELRKKNRQELNAK) forms a coiled coil. 2 stretches are compositionally biased toward basic and acidic residues: residues 572–581 (TLEKKSDKEK) and 590–626 (KERE…ELNA). Over residues 627–636 (KSHTSSSVLS) the composition is skewed to polar residues. Residues 641 to 653 (AELDGESEFEGFD) show a composition bias toward acidic residues.

The protein belongs to the DEAD box helicase family. DDX55/SPB4 subfamily. In terms of assembly, component of pre-60S ribosomal complexes.

The protein localises to the nucleus. It is found in the nucleolus. The catalysed reaction is ATP + H2O = ADP + phosphate + H(+). In terms of biological role, ATP-binding RNA helicase involved in the biogenesis of 60S ribosomal subunits. Binds 90S pre-ribosomal particles and dissociates from pre-60S ribosomal particles after processing of 27SB pre-rRNA. Required for the normal formation of 18S rRNA through the processing of pre-rRNAs at sites A0, A1 and A2, and the normal formation of 25S and 5.8S rRNAs through the processing of pre-rRNAs at sites C1 and C2. In Coccidioides immitis (strain RS) (Valley fever fungus), this protein is ATP-dependent rRNA helicase SPB4.